We begin with the raw amino-acid sequence, 505 residues long: Activin receptor type-1B (505 aa).

A signal peptide spans Met-1–Gly-23. Residues Ser-24–Glu-126 lie on the Extracellular side of the membrane. Residue Asn-43 is glycosylated (N-linked (GlcNAc...) asparagine). The helical transmembrane segment at Leu-127–Ile-149 threads the bilayer. The Cytoplasmic portion of the chain corresponds to Asn-150–Ile-505. The 30-residue stretch at Lys-177–Thr-206 folds into the GS domain. Positions Ile-207–Leu-497 constitute a Protein kinase domain. ATP contacts are provided by residues Ile-213–Val-221 and Lys-234. Residue Asp-335 is the Proton acceptor of the active site. Tyr-380 is modified (phosphotyrosine).

It belongs to the protein kinase superfamily. TKL Ser/Thr protein kinase family. TGFB receptor subfamily. In terms of assembly, forms an activin receptor complex with activin receptor type-2 (ACVR2A or ACVR2B). Part of a complex consisting of MAGI2/ARIP1, ACVR2A, ACVR1B and SMAD3. Interacts with SMAD2 and SMAD3. Interacts with SMAD7. Interacts with FKBP1A. Interacts with IGSF1. Interacts with CRIPTO. Interacts with TDP2. Interacts with TSC22D1/TSC-22. In terms of processing, autophosphorylated. Phosphorylated by activin receptor type-2 (ACVR2A or ACVR2B) in response to activin-binding at serine and threonine residues in the GS domain. Phosphorylation of ACVR1B by activin receptor type-2 regulates association with SMAD7. Ubiquitinated. Level of ubiquitination is regulated by the SMAD7-SMURF1 complex. Post-translationally, ubiquitinated.

The protein localises to the cell membrane. It catalyses the reaction L-threonyl-[receptor-protein] + ATP = O-phospho-L-threonyl-[receptor-protein] + ADP + H(+). The enzyme catalyses L-seryl-[receptor-protein] + ATP = O-phospho-L-seryl-[receptor-protein] + ADP + H(+). Activin receptor type-2 (ACVR2A or ACVR2B) activates the type-1 receptor through phosphorylation of its regulatory GS domain. In terms of biological role, transmembrane serine/threonine kinase activin type-1 receptor forming an activin receptor complex with activin receptor type-2 (ACVR2A or ACVR2B). Transduces the activin signal from the cell surface to the cytoplasm and is thus regulating a many physiological and pathological processes including neuronal differentiation and neuronal survival, hair follicle development and cycling, FSH production by the pituitary gland, wound healing, extracellular matrix production, immunosuppression and carcinogenesis. Activin is also thought to have a paracrine or autocrine role in follicular development in the ovary. Within the receptor complex, type-2 receptors (ACVR2A and/or ACVR2B) act as a primary activin receptors whereas the type-1 receptors like ACVR1B act as downstream transducers of activin signals. Activin binds to type-2 receptor at the plasma membrane and activates its serine-threonine kinase. The activated receptor type-2 then phosphorylates and activates the type-1 receptor such as ACVR1B. Once activated, the type-1 receptor binds and phosphorylates the SMAD proteins SMAD2 and SMAD3, on serine residues of the C-terminal tail. Soon after their association with the activin receptor and subsequent phosphorylation, SMAD2 and SMAD3 are released into the cytoplasm where they interact with the common partner SMAD4. This SMAD complex translocates into the nucleus where it mediates activin-induced transcription. Inhibitory SMAD7, which is recruited to ACVR1B through FKBP1A, can prevent the association of SMAD2 and SMAD3 with the activin receptor complex, thereby blocking the activin signal. Activin signal transduction is also antagonized by the binding to the receptor of inhibin-B via the IGSF1 inhibin coreceptor. ACVR1B also phosphorylates TDP2. The sequence is that of Activin receptor type-1B (Acvr1b) from Mus musculus (Mouse).